A 452-amino-acid chain; its full sequence is Peptidoglycan DL-endopeptidase CwlO (452 aa).

An N-terminal signal peptide occupies residues M1–A30. The span at A28–E38 shows a compositional bias: polar residues. Disordered regions lie at residues A28–K53 and A258–V317. 2 stretches are compositionally biased toward basic and acidic residues: residues I39–K53 and K263–D275. A compositionally biased stretch (low complexity) spans S276–V317. The NlpC/P60 domain occupies G321 to V450. Residue C358 is the Nucleophile of the active site. The active-site Proton acceptor is H410. N422 is an active-site residue.

This sequence belongs to the peptidase C40 family.

It localises to the secreted. In terms of biological role, shows a cell wall hydrolytic DL-endopeptidase activity. The polypeptide is Peptidoglycan DL-endopeptidase CwlO (cwlO) (Bacillus licheniformis (strain ATCC 14580 / DSM 13 / JCM 2505 / CCUG 7422 / NBRC 12200 / NCIMB 9375 / NCTC 10341 / NRRL NRS-1264 / Gibson 46)).